A 375-amino-acid chain; its full sequence is 23S rRNA (uracil(747)-C(5))-methyltransferase RlmC (375 aa).

[4Fe-4S] cluster-binding residues include cysteine 3, cysteine 11, cysteine 14, and cysteine 87. S-adenosyl-L-methionine contacts are provided by glutamine 212, phenylalanine 241, glutamate 262, and asparagine 307. Catalysis depends on cysteine 334, which acts as the Nucleophile.

Belongs to the class I-like SAM-binding methyltransferase superfamily. RNA M5U methyltransferase family. RlmC subfamily.

The enzyme catalyses uridine(747) in 23S rRNA + S-adenosyl-L-methionine = 5-methyluridine(747) in 23S rRNA + S-adenosyl-L-homocysteine + H(+). In terms of biological role, catalyzes the formation of 5-methyl-uridine at position 747 (m5U747) in 23S rRNA. The chain is 23S rRNA (uracil(747)-C(5))-methyltransferase RlmC from Escherichia coli O139:H28 (strain E24377A / ETEC).